The chain runs to 398 residues: Argininosuccinate synthase (398 aa).

9 to 17 (AYSGGLDTS) serves as a coordination point for ATP. Residues Tyr-87 and Ser-92 each coordinate L-citrulline. Gly-117 contacts ATP. L-aspartate-binding residues include Thr-119, Asn-123, and Asp-124. Residue Asn-123 coordinates L-citrulline. L-citrulline-binding residues include Arg-127, Ser-176, Ser-185, Glu-261, and Tyr-273.

This sequence belongs to the argininosuccinate synthase family. Type 1 subfamily. Homotetramer.

It is found in the cytoplasm. The catalysed reaction is L-citrulline + L-aspartate + ATP = 2-(N(omega)-L-arginino)succinate + AMP + diphosphate + H(+). It functions in the pathway amino-acid biosynthesis; L-arginine biosynthesis; L-arginine from L-ornithine and carbamoyl phosphate: step 2/3. The polypeptide is Argininosuccinate synthase (Clostridium tetani (strain Massachusetts / E88)).